The sequence spans 341 residues: NADH-quinone oxidoreductase subunit 8 (341 aa).

8 consecutive transmembrane segments (helical) span residues 9–29 (ALIAFLIINAMLLTASVLVYA), 75–95 (FIHALAPTIMVTIAMTVPALI), 108–128 (VGVLAILALTSISVYGITLAG), 154–174 (MGTAVLSVILQAGSLNVSAIV), 180–200 (GWAILGWHVFTNPIGALIFIV), 244–264 (LFVASFVIATLFFGGYLVPFE), 278–298 (VLLGLLQFLSLLAKTCFFAFL), and 321–341 (YLLPIGLANVILIALGVALFS).

The protein belongs to the complex I subunit 1 family. As to quaternary structure, NDH-1 is composed of 14 different subunits. Subunits Nqo7-14 constitute the membrane sector of the complex.

The protein resides in the cell inner membrane. It carries out the reaction a quinone + NADH + 5 H(+)(in) = a quinol + NAD(+) + 4 H(+)(out). Its function is as follows. NDH-1 shuttles electrons from NADH, via FMN and iron-sulfur (Fe-S) centers, to quinones in the respiratory chain. The immediate electron acceptor for the enzyme in this species is believed to be menaquinone. Couples the redox reaction to proton translocation (for every two electrons transferred, four hydrogen ions are translocated across the cytoplasmic membrane), and thus conserves the redox energy in a proton gradient. The chain is NADH-quinone oxidoreductase subunit 8 (nqo8) from Rhodothermus marinus (Rhodothermus obamensis).